The sequence spans 189 residues: MTTATETKTMPRLKERYRNEIVGQLREQYQYGNPMQVPGLVKIVVNMGVGEAARDAKLIDGAVRDLATITGQKPQVRRATKSIAQFKLREGMPIGAKVTLRGDRMWEFLDRLLSIALPRIRDFRGLDGRKLDGNGNYTFGLTEQSVFHEIDQDKIDRQRGMDITVVTTATTDDEGRALLKFLGFPFKEN.

It belongs to the universal ribosomal protein uL5 family. In terms of assembly, part of the 50S ribosomal subunit; part of the 5S rRNA/L5/L18/L25 subcomplex. Contacts the 5S rRNA and the P site tRNA. Forms a bridge to the 30S subunit in the 70S ribosome.

This is one of the proteins that bind and probably mediate the attachment of the 5S RNA into the large ribosomal subunit, where it forms part of the central protuberance. In the 70S ribosome it contacts protein S13 of the 30S subunit (bridge B1b), connecting the 2 subunits; this bridge is implicated in subunit movement. Contacts the P site tRNA; the 5S rRNA and some of its associated proteins might help stabilize positioning of ribosome-bound tRNAs. In Salinispora tropica (strain ATCC BAA-916 / DSM 44818 / JCM 13857 / NBRC 105044 / CNB-440), this protein is Large ribosomal subunit protein uL5.